A 316-amino-acid polypeptide reads, in one-letter code: Methionyl-tRNA formyltransferase (316 aa).

112–115 (SLLP) serves as a coordination point for (6S)-5,6,7,8-tetrahydrofolate.

This sequence belongs to the Fmt family.

The catalysed reaction is L-methionyl-tRNA(fMet) + (6R)-10-formyltetrahydrofolate = N-formyl-L-methionyl-tRNA(fMet) + (6S)-5,6,7,8-tetrahydrofolate + H(+). Attaches a formyl group to the free amino group of methionyl-tRNA(fMet). The formyl group appears to play a dual role in the initiator identity of N-formylmethionyl-tRNA by promoting its recognition by IF2 and preventing the misappropriation of this tRNA by the elongation apparatus. The protein is Methionyl-tRNA formyltransferase of Haemophilus ducreyi (strain 35000HP / ATCC 700724).